Consider the following 487-residue polypeptide: MPMPLNQLLPAAESGVLIRELTLDSRKVRPGDLFLAVPGTQQDGRVHIADAVARGAAAVAFEAEGAAPMHAESAVLVPVKGLAGQLSAIAGRFYGEPSRALHLIGVTGTNGKTSVSQLLAQALDLLGERCGIVGTLGTGFHGALEQGKHTTPDPVGVQATLASLKQAGARAVAMEVSSHGLDQGRVAALEFDVAVFTNLSRDHLDYHGSMEAYGAAKAKLFAWPNLRCRVINLDDAFGRELAQQAHDSRLIGYSLSDASAFLYCSEAQFDDHGVRARLVTPRGEGVLRSNLLGRFNLSNLLAVVGALLGMDYGLDEILKVLPQLQGPAGRMQRLGGGDKPLVVVDYAHTPDALEKVLEAMRPHVQGRLVCLFGCGGDRDRGKRPLMAAVAERLADVVWVTDDNPRSEDPAQIVADIRAGFCAPEQVQFIHGRGDAIARLIAQAEAADVLVLAGKGHEDYQEITGVRHPFSDLIEANEALAAWEAAHA.

UDP-N-acetyl-alpha-D-muramoyl-L-alanyl-D-glutamate-binding residues include leucine 23 and serine 25. 108 to 114 (GTNGKTS) is a binding site for ATP. Residues 150–151 (TT), serine 177, glutamine 183, and arginine 185 each bind UDP-N-acetyl-alpha-D-muramoyl-L-alanyl-D-glutamate. Position 217 is an N6-carboxylysine (lysine 217). Meso-2,6-diaminopimelate contacts are provided by residues arginine 378, 402–405 (DNPR), glycine 453, and glutamate 457. The Meso-diaminopimelate recognition motif signature appears at 402-405 (DNPR).

This sequence belongs to the MurCDEF family. MurE subfamily. Mg(2+) serves as cofactor. In terms of processing, carboxylation is probably crucial for Mg(2+) binding and, consequently, for the gamma-phosphate positioning of ATP.

It is found in the cytoplasm. The catalysed reaction is UDP-N-acetyl-alpha-D-muramoyl-L-alanyl-D-glutamate + meso-2,6-diaminopimelate + ATP = UDP-N-acetyl-alpha-D-muramoyl-L-alanyl-gamma-D-glutamyl-meso-2,6-diaminopimelate + ADP + phosphate + H(+). It functions in the pathway cell wall biogenesis; peptidoglycan biosynthesis. In terms of biological role, catalyzes the addition of meso-diaminopimelic acid to the nucleotide precursor UDP-N-acetylmuramoyl-L-alanyl-D-glutamate (UMAG) in the biosynthesis of bacterial cell-wall peptidoglycan. This chain is UDP-N-acetylmuramoyl-L-alanyl-D-glutamate--2,6-diaminopimelate ligase, found in Ectopseudomonas mendocina (strain ymp) (Pseudomonas mendocina).